A 351-amino-acid chain; its full sequence is Transmembrane and coiled-coil domain-containing protein 5B (351 aa).

The stretch at 17–214 (EIPKLEITKQ…WRSSIQSAKT (198 aa)) forms a coiled coil. The helical transmembrane segment at 292-312 (IFVVMIFFRLLGYVLFYLQYI) threads the bilayer.

Belongs to the TMCO5 family.

The protein localises to the membrane. This is Transmembrane and coiled-coil domain-containing protein 5B (TMCO5B) from Bos taurus (Bovine).